The following is a 132-amino-acid chain: Small ribosomal subunit protein uS11 (132 aa).

The protein belongs to the universal ribosomal protein uS11 family. In terms of assembly, part of the 30S ribosomal subunit. Interacts with proteins S7 and S18. Binds to IF-3.

Its function is as follows. Located on the platform of the 30S subunit, it bridges several disparate RNA helices of the 16S rRNA. Forms part of the Shine-Dalgarno cleft in the 70S ribosome. The chain is Small ribosomal subunit protein uS11 from Dichelobacter nodosus (strain VCS1703A).